The following is a 126-amino-acid chain: Cystatin-like protein (126 aa).

Residues 72 to 76 (QVVAG) carry the Secondary area of contact motif. An intrachain disulfide couples Cys-94 to Cys-115.

It belongs to the cystatin family.

The sequence is that of Cystatin-like protein (Cys) from Drosophila melanogaster (Fruit fly).